The primary structure comprises 109 residues: T cell receptor alpha variable 26-2 (109 aa).

The first 19 residues, 1 to 19 (MKLVTSITVLLSLGIMGDA), serve as a signal peptide directing secretion. The Ig-like domain maps to 20-109 (KTTQPNSMES…AAVYYCILRD (90 aa)). Residues cysteine 39 and cysteine 105 are joined by a disulfide bond. The N-linked (GlcNAc...) asparagine glycan is linked to asparagine 40.

Alpha-beta TR is a heterodimer composed of an alpha and beta chain; disulfide-linked. The alpha-beta TR is associated with the transmembrane signaling CD3 coreceptor proteins to form the TR-CD3 (TcR or TCR). The assembly of alpha-beta TR heterodimers with CD3 occurs in the endoplasmic reticulum where a single alpha-beta TR heterodimer associates with one CD3D-CD3E heterodimer, one CD3G-CD3E heterodimer and one CD247 homodimer forming a stable octameric structure. CD3D-CD3E and CD3G-CD3E heterodimers preferentially associate with TR alpha and TR beta chains, respectively. The association of the CD247 homodimer is the last step of TcR assembly in the endoplasmic reticulum and is required for transport to the cell surface.

The protein resides in the cell membrane. In terms of biological role, v region of the variable domain of T cell receptor (TR) alpha chain that participates in the antigen recognition. Alpha-beta T cell receptors are antigen specific receptors which are essential to the immune response and are present on the cell surface of T lymphocytes. Recognize peptide-major histocompatibility (MH) (pMH) complexes that are displayed by antigen presenting cells (APC), a prerequisite for efficient T cell adaptive immunity against pathogens. Binding of alpha-beta TR to pMH complex initiates TR-CD3 clustering on the cell surface and intracellular activation of LCK that phosphorylates the ITAM motifs of CD3G, CD3D, CD3E and CD247 enabling the recruitment of ZAP70. In turn ZAP70 phosphorylates LAT, which recruits numerous signaling molecules to form the LAT signalosome. The LAT signalosome propagates signal branching to three major signaling pathways, the calcium, the mitogen-activated protein kinase (MAPK) kinase and the nuclear factor NF-kappa-B (NF-kB) pathways, leading to the mobilization of transcription factors that are critical for gene expression and essential for T cell growth and differentiation. The T cell repertoire is generated in the thymus, by V-(D)-J rearrangement. This repertoire is then shaped by intrathymic selection events to generate a peripheral T cell pool of self-MH restricted, non-autoaggressive T cells. Post-thymic interaction of alpha-beta TR with the pMH complexes shapes TR structural and functional avidity. The polypeptide is T cell receptor alpha variable 26-2 (Homo sapiens (Human)).